A 431-amino-acid chain; its full sequence is Enolase (431 aa).

Gln166 contacts (2R)-2-phosphoglycerate. Glu208 serves as the catalytic Proton donor. Mg(2+) contacts are provided by Asp245, Glu288, and Asp315. The (2R)-2-phosphoglycerate site is built by Lys340, Arg369, Ser370, and Lys391. Lys340 (proton acceptor) is an active-site residue.

Belongs to the enolase family. The cofactor is Mg(2+).

It is found in the cytoplasm. The protein localises to the secreted. The protein resides in the cell surface. The catalysed reaction is (2R)-2-phosphoglycerate = phosphoenolpyruvate + H2O. It functions in the pathway carbohydrate degradation; glycolysis; pyruvate from D-glyceraldehyde 3-phosphate: step 4/5. Functionally, catalyzes the reversible conversion of 2-phosphoglycerate (2-PG) into phosphoenolpyruvate (PEP). It is essential for the degradation of carbohydrates via glycolysis. The polypeptide is Enolase (Clostridium botulinum (strain Kyoto / Type A2)).